The sequence spans 283 residues: Protein-S-isoprenylcysteine O-methyltransferase (283 aa).

Residues Met1–Leu15 are Cytoplasmic-facing. The helical transmembrane segment at Ser16–Leu32 threads the bilayer. The Lumenal portion of the chain corresponds to Thr33–Arg40. The helical transmembrane segment at Thr41–Tyr58 threads the bilayer. Residues Arg59–Arg68 are Cytoplasmic-facing. Residues Ala69–Gln86 traverse the membrane as a helical segment. At Ser87 to His91 the chain is on the lumenal side. The chain crosses the membrane as a helical span at residues Phe92–Ala111. Topologically, residues Val112–Glu130 are cytoplasmic. The chain crosses the membrane as a helical span at residues Tyr131 to Phe148. Residues Trp149–Lys153 are Lumenal-facing. The helical transmembrane segment at Gln154 to Arg173 threads the bilayer. The Cytoplasmic portion of the chain corresponds to Lys174 to Ser211. S-adenosyl-L-methionine contacts are provided by residues Gln189, His196–Val199, Tyr204, and His209–Tyr212. Residues Tyr212–Cys227 form a helical membrane-spanning segment. Asn228 is a topological domain (lumenal). A helical transmembrane segment spans residues Pro229–Phe243. The Cytoplasmic segment spans residues Arg244–Leu283. Arg246 lines the substrate pocket. Glu250 serves as a coordination point for S-adenosyl-L-methionine.

The protein belongs to the class VI-like SAM-binding methyltransferase superfamily. Isoprenylcysteine carboxyl methyltransferase family. In terms of tissue distribution, highly enriched in adult cerebellum, with a low level expression in other brain regions.

Its subcellular location is the endoplasmic reticulum membrane. The catalysed reaction is [protein]-C-terminal S-[(2E,6E)-farnesyl]-L-cysteine + S-adenosyl-L-methionine = [protein]-C-terminal S-[(2E,6E)-farnesyl]-L-cysteine methyl ester + S-adenosyl-L-homocysteine. In terms of biological role, catalyzes the post-translational methylation of isoprenylated C-terminal cysteine residues. The sequence is that of Protein-S-isoprenylcysteine O-methyltransferase (Icmt) from Mus musculus (Mouse).